We begin with the raw amino-acid sequence, 416 residues long: S-adenosylmethionine synthase (416 aa).

His16 lines the ATP pocket. Asp18 contributes to the Mg(2+) binding site. Glu44 is a K(+) binding site. Glu57 and Gln100 together coordinate L-methionine. The flexible loop stretch occupies residues 100-110 (QSPDISQGVTA). ATP-binding positions include 175–177 (DGK), 251–252 (KF), Asp260, 266–267 (RK), Ala283, and Lys287. Asp260 is a binding site for L-methionine. Lys291 lines the L-methionine pocket.

Belongs to the AdoMet synthase family. As to quaternary structure, homotetramer; dimer of dimers. It depends on Mg(2+) as a cofactor. K(+) is required as a cofactor.

Its subcellular location is the cytoplasm. It carries out the reaction L-methionine + ATP + H2O = S-adenosyl-L-methionine + phosphate + diphosphate. The protein operates within amino-acid biosynthesis; S-adenosyl-L-methionine biosynthesis; S-adenosyl-L-methionine from L-methionine: step 1/1. Catalyzes the formation of S-adenosylmethionine (AdoMet) from methionine and ATP. The overall synthetic reaction is composed of two sequential steps, AdoMet formation and the subsequent tripolyphosphate hydrolysis which occurs prior to release of AdoMet from the enzyme. The chain is S-adenosylmethionine synthase from Microcystis aeruginosa (strain NIES-843 / IAM M-2473).